The sequence spans 152 residues: Protein Smg homolog (152 aa).

Belongs to the Smg family.

The sequence is that of Protein Smg homolog from Chromobacterium violaceum (strain ATCC 12472 / DSM 30191 / JCM 1249 / CCUG 213 / NBRC 12614 / NCIMB 9131 / NCTC 9757 / MK).